Reading from the N-terminus, the 341-residue chain is GTP 3',8-cyclase (341 aa).

Residues 11–231 form the Radical SAM core domain; sequence KRERPLRDLR…DLINQHMPTE (221 aa). GTP is bound at residue Arg-20. [4Fe-4S] cluster-binding residues include Cys-27 and Cys-31. Tyr-33 is an S-adenosyl-L-methionine binding site. Cys-34 is a [4Fe-4S] cluster binding site. GTP is bound at residue Arg-75. Gly-79 contributes to the S-adenosyl-L-methionine binding site. Thr-106 contributes to the GTP binding site. Ser-130 lines the S-adenosyl-L-methionine pocket. Lys-167 is a binding site for GTP. Met-201 contributes to the S-adenosyl-L-methionine binding site. Cys-265 and Cys-268 together coordinate [4Fe-4S] cluster. 270 to 272 lines the GTP pocket; that stretch reads RAR. Cys-282 is a binding site for [4Fe-4S] cluster.

It belongs to the radical SAM superfamily. MoaA family. Monomer and homodimer. [4Fe-4S] cluster serves as cofactor.

It carries out the reaction GTP + AH2 + S-adenosyl-L-methionine = (8S)-3',8-cyclo-7,8-dihydroguanosine 5'-triphosphate + 5'-deoxyadenosine + L-methionine + A + H(+). The protein operates within cofactor biosynthesis; molybdopterin biosynthesis. Functionally, catalyzes the cyclization of GTP to (8S)-3',8-cyclo-7,8-dihydroguanosine 5'-triphosphate. This Bacillus velezensis (strain DSM 23117 / BGSC 10A6 / LMG 26770 / FZB42) (Bacillus amyloliquefaciens subsp. plantarum) protein is GTP 3',8-cyclase.